A 504-amino-acid chain; its full sequence is Cytochrome P450 6B6 (504 aa).

Residue Cys445 participates in heme binding.

This sequence belongs to the cytochrome P450 family. Heme is required as a cofactor.

The protein resides in the endoplasmic reticulum membrane. It localises to the microsome membrane. It catalyses the reaction an organic molecule + reduced [NADPH--hemoprotein reductase] + O2 = an alcohol + oxidized [NADPH--hemoprotein reductase] + H2O + H(+). The sequence is that of Cytochrome P450 6B6 (CYP6B6) from Helicoverpa armigera (Cotton bollworm).